A 565-amino-acid polypeptide reads, in one-letter code: Protein unc-87 (565 aa).

The segment covering 1-27 has biased composition (low complexity); the sequence is MLSFNNTTSASSFQSASSRYLMSSSSS. Disordered regions lie at residues 1 to 83 and 237 to 262; these read MLSF…TTNS and IPSQAGWNKGDSQKLMTNFGTPRNTN. Over residues 54 to 69 the composition is skewed to basic and acidic residues; it reads EALERLRPNTASRERN. 3 Calponin-like repeats span residues 237-262, 285-310, and 338-363; these read IPSQAGWNKGDSQKLMTNFGTPRNTN, VRLQSGTNKYCSQRGMTGFGSGRDVC, and VRLQAGTNKYDSQKGMTGFGTGRRET. The span at 250-262 shows a compositional bias: polar residues; sequence KLMTNFGTPRNTN. A compositionally biased stretch (basic and acidic residues) spans 369–381; that stretch reads SKHPEYDHEKPDQ. Positions 369–400 are disordered; it reads SKHPEYDHEKPDQSEIPLQSGTNKFASQKGMT. A compositionally biased stretch (polar residues) spans 384-398; sequence IPLQSGTNKFASQKG. Calponin-like repeat units lie at residues 384 to 409, 431 to 456, 472 to 497, and 517 to 542; these read IPLQSGTNKFASQKGMTGFGTARRET, IPSQMGSNQYASQKGMTGFGQPRWEV, VRLQSGTNRFASQAGMIGFGTCRNTT, and IPSQAGWNKGDSQKKMTSFGAPRDVK.

Belongs to the calponin family. In terms of assembly, monomer. Interacts with F-actin. Interacts with myosin. Expressed in the body wall muscles. Isoform a: Expression in the pharynx, anal depressor muscle, uterine muscle, vulva and unidentified neurons in the head and the ventral region. Isoform b: Expression in the body wall muscles, spermatheca, vulva and in the myoepithelial sheath.

Its subcellular location is the cytoplasm. It is found in the myofibril. It localises to the sarcomere. The protein resides in the i band. Thin filament-associated protein that is implicated in actin bundling and actin filament dynamics. Exhibits F-actin cross-linking activity. Required for the maintenance of sarcomeric actin organization in striated muscles. Competes with unc-60 isoform b for actin binding and protects actin filaments from depolymerization by unc-60, thereby contributing to actin filament stability. Cooperates with myosin to form actomyosin bundles and inhibits actomyosin ATPase activity and actomyosin motility. Might protect the myofilaments from mechanical stress. Functionally, acts as a negative regulator of myosin-dependent contractility of smooth muscle-like cells in the somatic gonad. The sequence is that of Protein unc-87 (unc-87) from Caenorhabditis elegans.